The chain runs to 1066 residues: Cytoplasmic dynein 2 intermediate chain 1 (1066 aa).

2 disordered regions span residues 22–366 (LWAI…ENAR) and 381–408 (YEDDFEVCDGDDDESSNEPESREKLEEL). Serine 30 bears the Phosphoserine mark. Basic and acidic residues-rich tracts occupy residues 30-135 (SKEE…EELR), 147-171 (ETRDRQLLERAERKGRSVSKVRSEE), 180-256 (DEDR…EERH), 264-308 (GFHF…KRDG), and 316-336 (NLVRNHGKDKDSRRKHGHEEG). Serine 247 is subject to Phosphoserine. 2 stretches are compositionally biased toward acidic residues: residues 351–362 (ETVEIEKEETDL) and 381–397 (YEDDFEVCDGDDDESSN). Residues 399 to 408 (PESREKLEEL) are compositionally biased toward basic and acidic residues. A binding to the DYNLT2B-DYNLT1/DYNLT3 dimer region spans residues 473-552 (ASHRQKSRTQ…DIQTEEIETR (80 aa)). WD repeat units follow at residues 694–734 (ICES…RLHY), 775–821 (VHKK…KADI), 907–947 (IRPV…PLLQ), and 952–992 (TDSH…LGPV).

Belongs to the dynein light intermediate chain family. As to quaternary structure, intermediate chain of the cytoplasmic dynein complex 2, a multisubunit complex, composed at least of eleven different proteins. The cytoplasmic dynein 2 complex consists of two catalytic heavy chains (HCs) and a number of non-catalytic subunits presented by intermediate chains (ICs), light intermediate chains (LICs) and light chains (LCs). Among them, a heavy chain (DYNC2H1), two intermediate chains (DYNC2I2 and DYNC2I1), a light intermediate chain (DYNC2LI1), and a light chain (DYNLT2B) are unique to the cytoplasmic dynein complex 2, but a subset of the light chains are also shared by dynein-1 and dynein-2 complexes. Interacts with DYNC2I2; their C-terminal domains each bind a copy of the heavy chain, and their extended N-terminal regions are held together by an array of light chain dimers. Interacts with DYNLT2B. Interacts (via the N-terminal half) with DYNLT2B-DYNLT1 dimer or with DYNLT2B-DYNLT3 dimer; this interaction is crucial for retrograde trafficking of ciliary proteins. In terms of tissue distribution, expressed in chondrocytes (at protein level).

Its subcellular location is the cell projection. It localises to the cilium. The protein localises to the cytoplasm. The protein resides in the cytoskeleton. It is found in the microtubule organizing center. Its subcellular location is the centrosome. Its function is as follows. Acts as one of several non-catalytic accessory components of the cytoplasmic dynein 2 complex (dynein-2 complex), a motor protein complex that drives the movement of cargos along microtubules within cilia and flagella in concert with the intraflagellar transport (IFT) system. DYNC2I1 plays a major role in retrograde ciliary protein trafficking in cilia and flagella. Also requires to maintain a functional transition zone. The polypeptide is Cytoplasmic dynein 2 intermediate chain 1 (Homo sapiens (Human)).